We begin with the raw amino-acid sequence, 319 residues long: ATP-dependent 6-phosphofructokinase (319 aa).

Gly-11 lines the ATP pocket. 21–25 (RAVVR) lines the ADP pocket. ATP-binding positions include 72 to 73 (RC) and 102 to 105 (GDGS). Asp-103 provides a ligand contact to Mg(2+). 125 to 127 (TID) is a binding site for substrate. Residue Asp-127 is the Proton acceptor of the active site. Position 154 (Arg-154) interacts with ADP. Substrate contacts are provided by residues Arg-162 and 169–171 (MGR). Residues 185–187 (GAE), Arg-211, and 213–215 (KKH) contribute to the ADP site. Residues Glu-222, Arg-243, and 249–252 (HIQR) each bind substrate.

This sequence belongs to the phosphofructokinase type A (PFKA) family. ATP-dependent PFK group I subfamily. Prokaryotic clade 'B1' sub-subfamily. As to quaternary structure, homotetramer. Requires Mg(2+) as cofactor.

The protein localises to the cytoplasm. It catalyses the reaction beta-D-fructose 6-phosphate + ATP = beta-D-fructose 1,6-bisphosphate + ADP + H(+). It participates in carbohydrate degradation; glycolysis; D-glyceraldehyde 3-phosphate and glycerone phosphate from D-glucose: step 3/4. Its activity is regulated as follows. Allosterically activated by ADP and other diphosphonucleosides, and allosterically inhibited by phosphoenolpyruvate. In terms of biological role, catalyzes the phosphorylation of D-fructose 6-phosphate to fructose 1,6-bisphosphate by ATP, the first committing step of glycolysis. The protein is ATP-dependent 6-phosphofructokinase of Halalkalibacterium halodurans (strain ATCC BAA-125 / DSM 18197 / FERM 7344 / JCM 9153 / C-125) (Bacillus halodurans).